A 967-amino-acid polypeptide reads, in one-letter code: Glutamate receptor 2.6 (967 aa).

Positions 1-31 are cleaved as a signal peptide; that stretch reads MSLFNHLLSRALPLWLLFFINFLVLLGKSQQ. Residues 32-590 lie on the Extracellular side of the membrane; sequence EVLQVQVGIV…WVFLKPLTRE (559 aa). 7 N-linked (GlcNAc...) asparagine glycosylation sites follow: asparagine 45, asparagine 57, asparagine 121, asparagine 336, asparagine 345, asparagine 424, and asparagine 550. A helical transmembrane segment spans residues 591-611; it reads LWFLTAASFLYIGIMVWIFEY. The Cytoplasmic portion of the chain corresponds to 612 to 621; sequence QASGDFRKQS. A helical transmembrane segment spans residues 622–642; that stretch reads IINKISNVFYFSFSTLFFAHM. The Cytoplasmic segment spans residues 643-651; the sequence is RPSESIFTR. Residues 652–672 form a helical membrane-spanning segment; the sequence is VLVVVWCFVLLILTQSYTATL. The Extracellular segment spans residues 673-832; the sequence is TSMLTVQELR…DSPIRLDHHS (160 aa). Asparagine 795 is a glycosylation site (N-linked (GlcNAc...) asparagine). Residues 833–853 form a helical membrane-spanning segment; the sequence is FEALFTIVFVVSMLLLLAMLV. Over 854–967 the chain is Cytoplasmic; the sequence is CRRYRQESKS…AALFSRIKSA (114 aa). Polar residues predominate over residues 864–874; sequence GEINANNSPTD. Positions 864 to 913 are disordered; the sequence is GEINANNSPTDGNMRAPPNQPTDDNMRAPTSPPIDDQVLEPPGPALNEAD.

Belongs to the glutamate-gated ion channel (TC 1.A.10.1) family. In terms of assembly, may form heteromers. As to expression, expressed predominantly in roots.

The protein localises to the membrane. Glutamate-gated receptor that probably acts as a non-selective cation channel. May be involved in light-signal transduction and calcium homeostasis via the regulation of calcium influx into cells. The chain is Glutamate receptor 2.6 (GLR2.6) from Arabidopsis thaliana (Mouse-ear cress).